The sequence spans 202 residues: Imidazoleglycerol-phosphate dehydratase (202 aa).

Belongs to the imidazoleglycerol-phosphate dehydratase family.

It localises to the cytoplasm. The catalysed reaction is D-erythro-1-(imidazol-4-yl)glycerol 3-phosphate = 3-(imidazol-4-yl)-2-oxopropyl phosphate + H2O. It functions in the pathway amino-acid biosynthesis; L-histidine biosynthesis; L-histidine from 5-phospho-alpha-D-ribose 1-diphosphate: step 6/9. This is Imidazoleglycerol-phosphate dehydratase from Sinorhizobium fredii (strain NBRC 101917 / NGR234).